The following is a 398-amino-acid chain: Cell division protein FtsZ (398 aa).

GTP contacts are provided by residues 21–25 (GGGGN), 108–110 (GTG), E139, R143, and D187.

This sequence belongs to the FtsZ family. As to quaternary structure, homodimer. Polymerizes to form a dynamic ring structure in a strictly GTP-dependent manner. Interacts directly with several other division proteins.

It localises to the cytoplasm. Its function is as follows. Essential cell division protein that forms a contractile ring structure (Z ring) at the future cell division site. The regulation of the ring assembly controls the timing and the location of cell division. One of the functions of the FtsZ ring is to recruit other cell division proteins to the septum to produce a new cell wall between the dividing cells. Binds GTP and shows GTPase activity. In Pseudomonas putida (strain ATCC 47054 / DSM 6125 / CFBP 8728 / NCIMB 11950 / KT2440), this protein is Cell division protein FtsZ.